Reading from the N-terminus, the 520-residue chain is Glucose-1-phosphate adenylyltransferase small subunit, chloroplastic (520 aa).

The N-terminal 71 residues, 1 to 71 (MASVSAIGVL…RNPIIVSPKA (71 aa)), are a transit peptide targeting the chloroplast.

Belongs to the bacterial/plant glucose-1-phosphate adenylyltransferase family. As to quaternary structure, heterotetramer. Leaves.

It is found in the plastid. The protein localises to the chloroplast. The catalysed reaction is alpha-D-glucose 1-phosphate + ATP + H(+) = ADP-alpha-D-glucose + diphosphate. It participates in glycan biosynthesis; starch biosynthesis. Its activity is regulated as follows. Activated by 3'phosphoglycerate, inhibited by orthophosphate. Allosteric regulation. Its function is as follows. This protein plays a role in synthesis of starch. It catalyzes the synthesis of the activated glycosyl donor, ADP-glucose from Glc-1-P and ATP. The sequence is that of Glucose-1-phosphate adenylyltransferase small subunit, chloroplastic (APS1) from Arabidopsis thaliana (Mouse-ear cress).